Here is a 141-residue protein sequence, read N- to C-terminus: Methylglyoxal synthase (141 aa).

The MGS-like domain maps to 1-141 (MNIALIAHDK…PKLQKNKSDK (141 aa)). Residues H8, K12, and 34–37 (TGTT) contribute to the substrate site. D60 serves as the catalytic Proton donor/acceptor. H87 contacts substrate.

Belongs to the methylglyoxal synthase family.

The catalysed reaction is dihydroxyacetone phosphate = methylglyoxal + phosphate. Catalyzes the formation of methylglyoxal from dihydroxyacetone phosphate. The polypeptide is Methylglyoxal synthase (Caldicellulosiruptor bescii (strain ATCC BAA-1888 / DSM 6725 / KCTC 15123 / Z-1320) (Anaerocellum thermophilum)).